The following is a 483-amino-acid chain: Cysteine--tRNA ligase (483 aa).

Position 29 (Cys-29) interacts with Zn(2+). Residues 31 to 41 carry the 'HIGH' region motif; sequence PTVYGHAHLGH. Cys-221, His-246, and Glu-250 together coordinate Zn(2+). A 'KMSKS' region motif is present at residues 278-282; that stretch reads KMGKS. Position 281 (Lys-281) interacts with ATP.

The protein belongs to the class-I aminoacyl-tRNA synthetase family. As to quaternary structure, monomer. It depends on Zn(2+) as a cofactor.

It localises to the cytoplasm. It carries out the reaction tRNA(Cys) + L-cysteine + ATP = L-cysteinyl-tRNA(Cys) + AMP + diphosphate. The polypeptide is Cysteine--tRNA ligase (Chlorobium luteolum (strain DSM 273 / BCRC 81028 / 2530) (Pelodictyon luteolum)).